We begin with the raw amino-acid sequence, 995 residues long: Translation initiation factor IF-2 (995 aa).

The tract at residues Asn-53–Val-399 is disordered. Pro residues-rich tracts occupy residues Pro-60–Gly-87 and Thr-104–Ser-119. Low complexity predominate over residues Ala-135–Gln-160. Positions Gln-161–Pro-171 are enriched in basic and acidic residues. The span at Arg-177 to Gly-192 shows a compositional bias: pro residues. Over residues Ser-193–Pro-202 the composition is skewed to low complexity. Pro residues-rich tracts occupy residues Ala-203 to Arg-213 and Arg-242 to Ala-264. Positions Arg-273 to Gly-363 are enriched in gly residues. The span at Thr-367–Arg-376 shows a compositional bias: basic residues. The tr-type G domain occupies Ser-486–Glu-658. The segment at Gly-495–Thr-502 is G1. Gly-495 to Thr-502 contributes to the GTP binding site. The G2 stretch occupies residues Gly-520 to His-524. The interval Asp-545–Gly-548 is G3. Residues Asp-545–His-549 and Asn-599–Asp-602 contribute to the GTP site. Residues Asn-599–Asp-602 form a G4 region. The tract at residues Ala-635 to Lys-637 is G5.

The protein belongs to the TRAFAC class translation factor GTPase superfamily. Classic translation factor GTPase family. IF-2 subfamily.

It localises to the cytoplasm. Its function is as follows. One of the essential components for the initiation of protein synthesis. Protects formylmethionyl-tRNA from spontaneous hydrolysis and promotes its binding to the 30S ribosomal subunits. Also involved in the hydrolysis of GTP during the formation of the 70S ribosomal complex. In Salinispora arenicola (strain CNS-205), this protein is Translation initiation factor IF-2.